Here is a 20-residue protein sequence, read N- to C-terminus: Unknown protein NF003 from 2D-PAGE (20 aa).

The polypeptide is Unknown protein NF003 from 2D-PAGE (Naegleria fowleri (Brain eating amoeba)).